The following is a 1227-amino-acid chain: DNA-directed RNA polymerase subunit beta' (1227 aa).

4 residues coordinate Zn(2+): Cys-60, Cys-62, Cys-75, and Cys-78. The Mg(2+) site is built by Asp-449, Asp-451, and Asp-453. Positions 847, 921, 928, and 931 each coordinate Zn(2+).

This sequence belongs to the RNA polymerase beta' chain family. In terms of assembly, the RNAP catalytic core consists of 2 alpha, 1 beta, 1 beta' and 1 omega subunit. When a sigma factor is associated with the core the holoenzyme is formed, which can initiate transcription. Requires Mg(2+) as cofactor. It depends on Zn(2+) as a cofactor.

It catalyses the reaction RNA(n) + a ribonucleoside 5'-triphosphate = RNA(n+1) + diphosphate. Its function is as follows. DNA-dependent RNA polymerase catalyzes the transcription of DNA into RNA using the four ribonucleoside triphosphates as substrates. The sequence is that of DNA-directed RNA polymerase subunit beta' from Lysinibacillus sphaericus (strain C3-41).